Reading from the N-terminus, the 463-residue chain is Siroheme synthase 1 (463 aa).

The precorrin-2 dehydrogenase /sirohydrochlorin ferrochelatase stretch occupies residues M1–V203. Residues E22 to V23 and P43 to H44 each bind NAD(+). S128 carries the post-translational modification Phosphoserine. Positions G215 to V463 are uroporphyrinogen-III C-methyltransferase. P224 is a binding site for S-adenosyl-L-methionine. D247 serves as the catalytic Proton acceptor. Catalysis depends on K269, which acts as the Proton donor. S-adenosyl-L-methionine-binding positions include G300–D302, I305, T330–A331, M382, and G411.

In the N-terminal section; belongs to the precorrin-2 dehydrogenase / sirohydrochlorin ferrochelatase family. This sequence in the C-terminal section; belongs to the precorrin methyltransferase family.

It catalyses the reaction uroporphyrinogen III + 2 S-adenosyl-L-methionine = precorrin-2 + 2 S-adenosyl-L-homocysteine + H(+). The catalysed reaction is precorrin-2 + NAD(+) = sirohydrochlorin + NADH + 2 H(+). It carries out the reaction siroheme + 2 H(+) = sirohydrochlorin + Fe(2+). It participates in cofactor biosynthesis; adenosylcobalamin biosynthesis; precorrin-2 from uroporphyrinogen III: step 1/1. Its pathway is cofactor biosynthesis; adenosylcobalamin biosynthesis; sirohydrochlorin from precorrin-2: step 1/1. It functions in the pathway porphyrin-containing compound metabolism; siroheme biosynthesis; precorrin-2 from uroporphyrinogen III: step 1/1. The protein operates within porphyrin-containing compound metabolism; siroheme biosynthesis; siroheme from sirohydrochlorin: step 1/1. It participates in porphyrin-containing compound metabolism; siroheme biosynthesis; sirohydrochlorin from precorrin-2: step 1/1. In terms of biological role, multifunctional enzyme that catalyzes the SAM-dependent methylations of uroporphyrinogen III at position C-2 and C-7 to form precorrin-2 via precorrin-1. Then it catalyzes the NAD-dependent ring dehydrogenation of precorrin-2 to yield sirohydrochlorin. Finally, it catalyzes the ferrochelation of sirohydrochlorin to yield siroheme. The polypeptide is Siroheme synthase 1 (Aeromonas hydrophila subsp. hydrophila (strain ATCC 7966 / DSM 30187 / BCRC 13018 / CCUG 14551 / JCM 1027 / KCTC 2358 / NCIMB 9240 / NCTC 8049)).